A 609-amino-acid polypeptide reads, in one-letter code: Zinc metalloproteinase-disintegrin-like VMP-III (609 aa).

An N-terminal signal peptide occupies residues 1–20 (MIQVLLVTICLAAFPYQGSS). A propeptide spanning residues 21 to 189 (IILESGNVND…KKASQLVVTA (169 aa)) is cleaved from the precursor. Residues 198-393 (RFVELFLVVD…HNPECILNEP (196 aa)) enclose the Peptidase M12B domain. The Ca(2+) site is built by E201 and D285. 3 cysteine pairs are disulfide-bonded: C308/C388, C348/C372, and C350/C355. H333 contacts Zn(2+). E334 is a catalytic residue. Positions 337 and 343 each coordinate Zn(2+). N371 is a glycosylation site (N-linked (GlcNAc...) asparagine). The Ca(2+) site is built by C388, N391, V403, N406, L408, E410, E413, and D416. The region spanning 401-487 (PPVCGNELLE…ECPADVFHKN (87 aa)) is the Disintegrin domain. Cystine bridges form between C404-C433, C415-C428, C417-C423, C427-C450, C441-C447, C446-C472, C459-C479, C466-C498, C491-C503, C510-C560, C525-C571, C538-C548, C555-C597, and C591-C602. The short motif at 465-467 (ECD) is the D/ECD-tripeptide element. Ca(2+) contacts are provided by D467, P468, E470, D482, and V483.

This sequence belongs to the venom metalloproteinase (M12B) family. P-III subfamily. P-IIIa sub-subfamily. In terms of assembly, monomer. Zn(2+) is required as a cofactor. As to expression, expressed by the venom gland.

It localises to the secreted. Functionally, snake venom metalloproteinase that impairs hemostasis in the envenomed animal. The polypeptide is Zinc metalloproteinase-disintegrin-like VMP-III (Crotalus viridis viridis (Prairie rattlesnake)).